Reading from the N-terminus, the 472-residue chain is Coenzyme F(430) synthetase (472 aa).

119–125 (GVKAKTS) is an ATP binding site.

Belongs to the MurCDEF family.

It carries out the reaction 15,17(3)-seco-F430-17(3)-acid + ATP = coenzyme F430 + ADP + phosphate. In terms of biological role, involved in the biosynthesis of the unique nickel-containing tetrapyrrole coenzyme F430, the prosthetic group of methyl-coenzyme M reductase (MCR), which plays a key role in methanogenesis and anaerobic methane oxidation. Catalyzes the activation the g-propionate side chain of 15,17(3)-seco-F430-17(3)-acid (seco-F430) for intramolecular C-C bond formation to yield the carbocyclic F ring of coenzyme F430. In Methanosarcina acetivorans (strain ATCC 35395 / DSM 2834 / JCM 12185 / C2A), this protein is Coenzyme F(430) synthetase.